We begin with the raw amino-acid sequence, 308 residues long: MLTDRVLATKEALVVALGDNWERYRANMKNWFRSRWTKEEFDAESRKILTPDKLHLHNQFLLALLNKIDAFAPLENPPAVQTSSSSGNRSKRRKRSCRTFAERLNFELSDVLDFVAEDNMQIIRPPTTIGIPSDQQQQQLQSQRYCAQELFLPDAGFIMGRFLIGAWEIGLVSVDDNVAEYVAMAVQVLLKDLLSAIIKKRKHYKTSGEGNFYYDVGAPLRDPSLRNTVTRQKVDDTPLELDKELNTANFMRRQNDDVTFLSACEEVQPTERTVITLKDCQLALRDRNLIGSHAVYSINMERLNMMMH.

It belongs to the TADA1 family. As to quaternary structure, component of the Spt-Ada-Gcn5 acetyltransferase (SAGA) complex consisting of wda/Taf5L, Saf6, Taf9, Taf10b, Taf12, Ada1, Spt3, Spt7, Spt20, Sf3b3, Sf3b5, Nipped-A/Tra1, a histone acetyltransferase (HAT) module made up of Gcn5, Ada2b (Isoform B), Ada3 and Sgf29, and a deubiquitinase (DUB) module made up of not/nonstop, Sgf11 and e(y)2 tethered to SAGA by Atxn7. Not a component of the Ada2a-containing ATAC complex.

It localises to the nucleus. Component of the transcription regulatory complex SAGA, a multiprotein complex that activates transcription by remodeling chromatin and mediating histone acetylation and deubiquitination. The SAGA complex predominantly acetylates histone H3. In Drosophila melanogaster (Fruit fly), this protein is Transcriptional adapter 1-1.